A 378-amino-acid chain; its full sequence is Chaperone protein DnaJ (378 aa).

Residues 4 to 68 (DFYEILGVSR…ETRARYDRFG (65 aa)) form the J domain. A CR-type zinc finger spans residues 136–218 (GGEKEIRIPH…CGGAGRKQET (83 aa)). Residues Cys-149, Cys-152, Cys-166, Cys-169, Cys-192, Cys-195, Cys-206, and Cys-209 each coordinate Zn(2+). CXXCXGXG motif repeat units lie at residues 149-156 (CKTCSGSG), 166-173 (CGTCNGTG), 192-199 (CPTCNGEG), and 206-213 (CESCGGAG).

The protein belongs to the DnaJ family. As to quaternary structure, homodimer. Zn(2+) serves as cofactor.

The protein localises to the cytoplasm. In terms of biological role, participates actively in the response to hyperosmotic and heat shock by preventing the aggregation of stress-denatured proteins and by disaggregating proteins, also in an autonomous, DnaK-independent fashion. Unfolded proteins bind initially to DnaJ; upon interaction with the DnaJ-bound protein, DnaK hydrolyzes its bound ATP, resulting in the formation of a stable complex. GrpE releases ADP from DnaK; ATP binding to DnaK triggers the release of the substrate protein, thus completing the reaction cycle. Several rounds of ATP-dependent interactions between DnaJ, DnaK and GrpE are required for fully efficient folding. Also involved, together with DnaK and GrpE, in the DNA replication of plasmids through activation of initiation proteins. This Picosynechococcus sp. (strain ATCC 27264 / PCC 7002 / PR-6) (Agmenellum quadruplicatum) protein is Chaperone protein DnaJ.